The sequence spans 232 residues: Clarin-1 (232 aa).

A helical membrane pass occupies residues isoleucine 8–leucine 28. Residue asparagine 48 is glycosylated (N-linked (GlcNAc...) asparagine). 2 helical membrane passes run isoleucine 101–tyrosine 121 and leucine 135–phenylalanine 155. Asparagine 184 is a glycosylation site (N-linked (GlcNAc...) asparagine). A helical membrane pass occupies residues threonine 186 to isoleucine 206.

Belongs to the clarin family.

Its subcellular location is the cell membrane. Functionally, may have a role in the excitatory ribbon synapse junctions between hair cells and cochlear ganglion cells and presumably also in analogous synapses within the retina. This is Clarin-1 (Clrn1) from Rattus norvegicus (Rat).